We begin with the raw amino-acid sequence, 276 residues long: Pantothenate synthetase (276 aa).

26 to 33 contributes to the ATP binding site; sequence MGFLHEGH. The active-site Proton donor is His33. Gln57 contributes to the (R)-pantoate binding site. Residue Gln57 coordinates beta-alanine. 142 to 145 is an ATP binding site; sequence GLKD. Gln148 provides a ligand contact to (R)-pantoate. ATP is bound by residues Ile171 and 179–182; that span reads KSSR.

The protein belongs to the pantothenate synthetase family. Homodimer.

The protein localises to the cytoplasm. The catalysed reaction is (R)-pantoate + beta-alanine + ATP = (R)-pantothenate + AMP + diphosphate + H(+). The protein operates within cofactor biosynthesis; (R)-pantothenate biosynthesis; (R)-pantothenate from (R)-pantoate and beta-alanine: step 1/1. In terms of biological role, catalyzes the condensation of pantoate with beta-alanine in an ATP-dependent reaction via a pantoyl-adenylate intermediate. The chain is Pantothenate synthetase from Exiguobacterium sibiricum (strain DSM 17290 / CCUG 55495 / CIP 109462 / JCM 13490 / 255-15).